Reading from the N-terminus, the 212-residue chain is Cyclin-P4-1 (212 aa).

The protein belongs to the cyclin family. Cyclin U/P subfamily.

The protein is Cyclin-P4-1 (CYCP4-1) of Oryza sativa subsp. japonica (Rice).